Reading from the N-terminus, the 586-residue chain is Asparagine synthetase [glutamine-hydrolyzing] 1 (586 aa).

Residue cysteine 2 is the For GATase activity of the active site. One can recognise a Glutamine amidotransferase type-2 domain in the interval 2–185; the sequence is CGILAVLGCS…PGHLYSSRER (184 aa). L-glutamine is bound by residues 50 to 54, 75 to 77, and aspartate 98; these read RLAIV and NGE. Positions 193–516 constitute an Asparagine synthetase domain; that stretch reads PTWFSESIPS…PQNSARLTVP (324 aa). ATP-binding positions include leucine 231, valine 267, and 341 to 342; that span reads SG.

The enzyme catalyses L-aspartate + L-glutamine + ATP + H2O = L-asparagine + L-glutamate + AMP + diphosphate + H(+). The protein operates within amino-acid biosynthesis; L-asparagine biosynthesis; L-asparagine from L-aspartate (L-Gln route): step 1/1. In Lotus japonicus (Lotus corniculatus var. japonicus), this protein is Asparagine synthetase [glutamine-hydrolyzing] 1 (AS1).